A 393-amino-acid chain; its full sequence is Putative amino-acid ABC transporter permease protein YhdX (393 aa).

A run of 8 helical transmembrane segments spans residues 21 to 41 (AWLF…WLFH), 92 to 112 (LLVS…IGLA), 128 to 148 (IEIF…FAVL), 180 to 200 (DGFI…VGLF), 219 to 239 (IAAV…GAAL), 256 to 276 (VLIP…SAFI), 333 to 353 (SSLA…GTVL), and 363 to 383 (IAMT…LMNI). Residues 88–381 (LLNTLLVSAL…IISLTISLLM (294 aa)) enclose the ABC transmembrane type-1 domain.

This sequence belongs to the binding-protein-dependent transport system permease family. HisMQ subfamily.

It localises to the cell inner membrane. Probably part of the binding-protein-dependent transport system YdhWXYZ for an amino acid; probably responsible for the translocation of the substrate across the membrane. The sequence is that of Putative amino-acid ABC transporter permease protein YhdX (yhdX) from Escherichia coli (strain K12).